A 166-amino-acid polypeptide reads, in one-letter code: Interferon gamma (166 aa).

An N-terminal signal peptide occupies residues 1–23 (MKYTSYFLALLLCVLLGFSGSYG). Q24 is modified (pyrrolidone carboxylic acid). N-linked (GlcNAc...) asparagine glycans are attached at residues N39 and N106.

The protein belongs to the type II (or gamma) interferon family. As to quaternary structure, homodimer. Interacts with IFNGR1 (via extracellular domain); this interaction promotes IFNGR1 dimerization. Released primarily from activated T lymphocytes.

The protein resides in the secreted. Functionally, type II interferon produced by immune cells such as T-cells and NK cells that plays crucial roles in antimicrobial, antiviral, and antitumor responses by activating effector immune cells and enhancing antigen presentation. Primarily signals through the JAK-STAT pathway after interaction with its receptor IFNGR1 to affect gene regulation. Upon IFNG binding, IFNGR1 intracellular domain opens out to allow association of downstream signaling components JAK2, JAK1 and STAT1, leading to STAT1 activation, nuclear translocation and transcription of IFNG-regulated genes. Many of the induced genes are transcription factors such as IRF1 that are able to further drive regulation of a next wave of transcription. Plays a role in class I antigen presentation pathway by inducing a replacement of catalytic proteasome subunits with immunoproteasome subunits. In turn, increases the quantity, quality, and repertoire of peptides for class I MHC loading. Increases the efficiency of peptide generation also by inducing the expression of activator PA28 that associates with the proteasome and alters its proteolytic cleavage preference. Up-regulates as well MHC II complexes on the cell surface by promoting expression of several key molecules such as cathepsins B/CTSB, H/CTSH, and L/CTSL. Participates in the regulation of hematopoietic stem cells during development and under homeostatic conditions by affecting their development, quiescence, and differentiation. The protein is Interferon gamma (IFNG) of Bubalus bubalis (Domestic water buffalo).